We begin with the raw amino-acid sequence, 238 residues long: MTEPTNTLPNLGAAELAAYIDHTLLRPDAGAAEIAAWCDEAVTHGFKSVCVNPIQIPLVAAKLAGTGVGVCSVIGFPFGASPTAVKVAEAAWVVAHGATEVDMVIDIGALKDGRAEAVRDDIAAVKAACGKALLKVIIEACLLDDEQKALACRLSAEAGADFVKTSTGFAGGGATAKDVALMRRTVGSALGVKASGGVRTRDDALRMIAAGASRIGASASIAIVAEADAASTGAKGGY.

Asp102 serves as the catalytic Proton donor/acceptor. Lys164 serves as the catalytic Schiff-base intermediate with acetaldehyde. Lys193 serves as the catalytic Proton donor/acceptor.

It belongs to the DeoC/FbaB aldolase family. DeoC type 1 subfamily.

Its subcellular location is the cytoplasm. The catalysed reaction is 2-deoxy-D-ribose 5-phosphate = D-glyceraldehyde 3-phosphate + acetaldehyde. The protein operates within carbohydrate degradation; 2-deoxy-D-ribose 1-phosphate degradation; D-glyceraldehyde 3-phosphate and acetaldehyde from 2-deoxy-alpha-D-ribose 1-phosphate: step 2/2. Its function is as follows. Catalyzes a reversible aldol reaction between acetaldehyde and D-glyceraldehyde 3-phosphate to generate 2-deoxy-D-ribose 5-phosphate. The polypeptide is Deoxyribose-phosphate aldolase (Rhodospirillum rubrum (strain ATCC 11170 / ATH 1.1.1 / DSM 467 / LMG 4362 / NCIMB 8255 / S1)).